A 399-amino-acid chain; its full sequence is MAKEKFERTKPHLNIGTIGHIDHGKTTLTAAITKALAYKGFADFTPFDAIDKAPEEKARGITINVTHVEYETEKRHYAHIDCPGHADYIKNMITGAAQMDGAILVVAATDGVMPQTREHVLLARQVNVPAMVVFINKVDMVDDEELVELVEEEVRDLLSKYEFPGDEVPVIKGSALMALEADNPDDPWVQKIYELMDAVDNYVPEPQRETDKPFLMPIEDIFSITGRGTVVTGRIERGVIHVGDEVEIVGLSYEVRKTVVTGVEMFRKLLDEGVAGDNVGCLLRGVGKDEVKRGQVLAKPGSITPHKKFKANIYVLKKEEGGRHTPFTKGYRPQFYIRTADVTGELVDLPEGVEMVMPGDNVVMTVELIYPVAIEKGMRFAVREGGRTVGAGVVSEIIE.

The tr-type G domain maps to 10–207 (KPHLNIGTIG…AVDNYVPEPQ (198 aa)). The tract at residues 19–26 (GHIDHGKT) is G1. Residue 19–26 (GHIDHGKT) participates in GTP binding. T26 lines the Mg(2+) pocket. A G2 region spans residues 60–64 (GITIN). The interval 81–84 (DCPG) is G3. GTP is bound by residues 81-85 (DCPGH) and 136-139 (NKVD). A G4 region spans residues 136–139 (NKVD). Positions 174-176 (SAL) are G5.

It belongs to the TRAFAC class translation factor GTPase superfamily. Classic translation factor GTPase family. EF-Tu/EF-1A subfamily. Monomer.

The protein localises to the cytoplasm. It catalyses the reaction GTP + H2O = GDP + phosphate + H(+). In terms of biological role, GTP hydrolase that promotes the GTP-dependent binding of aminoacyl-tRNA to the A-site of ribosomes during protein biosynthesis. This is Elongation factor Tu from Kosmotoga olearia (strain ATCC BAA-1733 / DSM 21960 / TBF 19.5.1).